We begin with the raw amino-acid sequence, 76 residues long: Sec-independent protein translocase protein TatA (76 aa).

The chain crosses the membrane as a helical span at residues 1–21; it reads MGGISIWQLLIIALIVVLLFG. Residues 43–76 form a disordered region; it reads MSSEDEKKAIEDTSAEKTAQTEEKKTESKDKEQA. Positions 46 to 76 are enriched in basic and acidic residues; that stretch reads EDEKKAIEDTSAEKTAQTEEKKTESKDKEQA.

The protein belongs to the TatA/E family. In terms of assembly, the Tat system comprises two distinct complexes: a TatABC complex, containing multiple copies of TatA, TatB and TatC subunits, and a separate TatA complex, containing only TatA subunits. Substrates initially bind to the TatABC complex, which probably triggers association of the separate TatA complex to form the active translocon.

It is found in the cell inner membrane. Part of the twin-arginine translocation (Tat) system that transports large folded proteins containing a characteristic twin-arginine motif in their signal peptide across membranes. TatA could form the protein-conducting channel of the Tat system. This Shewanella loihica (strain ATCC BAA-1088 / PV-4) protein is Sec-independent protein translocase protein TatA.